We begin with the raw amino-acid sequence, 1837 residues long: Zinc finger SWIM domain-containing protein 8 (1837 aa).

Ser36, Ser48, and Ser53 each carry phosphoserine. The segment at 45-65 is disordered; the sequence is RKQSAGPNSPTGGGGGGGSGG. Gly residues predominate over residues 55–65; that stretch reads TGGGGGGGSGG. An SWIM-type zinc finger spans residues 172–208; that stretch reads YNVAVMFDRCRVTSCSCTCGAGAKWCTHVVALCLFRI. Ser437 is modified (phosphoserine). Disordered stretches follow at residues 514 to 727, 803 to 823, and 1016 to 1232; these read SRPG…EEDD, NPPD…KVST, and SQTH…VPNQ. Composition is skewed to basic and acidic residues over residues 523–532 and 566–575; these read GLEESRDRPR and LSAEGGDKAL. Ser567 is modified (phosphoserine). The span at 579 to 602 shows a compositional bias: gly residues; the sequence is GPGGGKAKALGGAGSGSKGSAGGG. Polar residues predominate over residues 1019–1040; sequence HKPQTLSSFYSSSRPTTASQRS. Gly residues predominate over residues 1119–1130; sequence SRGGYNGRGWGS. Phosphothreonine is present on Thr1139. Positions 1144 to 1159 are enriched in polar residues; the sequence is IDSSAPETTSDSSPTL. Phosphoserine is present on residues Ser1153, Ser1156, and Ser1160. Low complexity predominate over residues 1174-1209; that stretch reads GRGQDSDSISSSSSDSLGSSSSSGSRRASASGGARA. Positions 1210–1226 are enriched in basic and acidic residues; the sequence is KTVEVGRYKGRRPESHA. Ser1267 bears the Phosphoserine mark. 2 disordered regions span residues 1442–1464 and 1635–1656; these read SASG…GGPG and QPSP…SQPV. The segment covering 1447–1464 has biased composition (gly residues); that stretch reads RAGGEAGRGMPEGRGGPG. Ser1836 is modified (phosphoserine).

Belongs to the ZSWIM8 family. Component of the SCF-like E3 ubiquitin-protein ligase complex which contains CUL3, RBX1, ELOB, ELOC and ZSWIM8. In terms of assembly, (Microbial infection) Interacts with Zika virus protein NS5; this interaction allows STAT2 binding and subsequent proteasomal degradation.

The protein resides in the cytoplasm. The protein localises to the cytosol. It participates in protein modification; protein ubiquitination. Its function is as follows. Substrate recognition component of a SCF-like E3 ubiquitin-protein ligase complex that promotes target-directed microRNA degradation (TDMD), a process that mediates degradation of microRNAs (miRNAs). The SCF-like E3 ubiquitin-protein ligase complex acts by catalyzing ubiquitination and subsequent degradation of AGO proteins (AGO1, AGO2, AGO3 and/or AGO4), thereby exposing miRNAs for degradation. Specifically recognizes and binds AGO proteins when they are engaged with a TDMD target. May also act as a regulator of axon guidance: specifically recognizes misfolded ROBO3 and promotes its ubiquitination and subsequent degradation. Plays an essential role for proper embryonic development of heart and lung. Controls protein quality of DAB1, a key signal molecule for brain development, thus protecting its signaling strength. Mechanistically, recognizes intrinsically disordered regions of DAB1 and eliminates misfolded DAB1 that cannot be properly phosphorylated. In terms of biological role, (Microbial infection) Participates in Zika virus inhibition of IFN signaling by acting as a scaffold protein to connect ZSWIM8/CUL3 ligase complex and STAT2, leading to STAT2 degradation. The protein is Zinc finger SWIM domain-containing protein 8 of Homo sapiens (Human).